Here is a 493-residue protein sequence, read N- to C-terminus: Glutamyl-tRNA(Gln) amidotransferase subunit A (493 aa).

Catalysis depends on charge relay system residues Lys79 and Ser159. Ser183 (acyl-ester intermediate) is an active-site residue.

The protein belongs to the amidase family. GatA subfamily. In terms of assembly, heterotrimer of A, B and C subunits.

The catalysed reaction is L-glutamyl-tRNA(Gln) + L-glutamine + ATP + H2O = L-glutaminyl-tRNA(Gln) + L-glutamate + ADP + phosphate + H(+). Functionally, allows the formation of correctly charged Gln-tRNA(Gln) through the transamidation of misacylated Glu-tRNA(Gln) in organisms which lack glutaminyl-tRNA synthetase. The reaction takes place in the presence of glutamine and ATP through an activated gamma-phospho-Glu-tRNA(Gln). This Brucella suis (strain ATCC 23445 / NCTC 10510) protein is Glutamyl-tRNA(Gln) amidotransferase subunit A.